Consider the following 161-residue polypeptide: Endoribonuclease YbeY (161 aa).

Zn(2+) contacts are provided by H127, H131, and H137.

The protein belongs to the endoribonuclease YbeY family. Zn(2+) serves as cofactor.

It localises to the cytoplasm. In terms of biological role, single strand-specific metallo-endoribonuclease involved in late-stage 70S ribosome quality control and in maturation of the 3' terminus of the 16S rRNA. The sequence is that of Endoribonuclease YbeY from Listeria monocytogenes serotype 4a (strain HCC23).